A 159-amino-acid polypeptide reads, in one-letter code: Vesicle transport protein SFT2A (159 aa).

The Cytoplasmic portion of the chain corresponds to 1–36 (MEKLRRVLSGQDDEEQGLTAQVLDASSLSFNTRLKW). At Ser-9 the chain carries Phosphoserine. The helical transmembrane segment at 37-57 (FAICFVCGVFFSILGTGLLWL) threads the bilayer. Residues 58 to 62 (PGGIK) are Lumenal-facing. A helical transmembrane segment spans residues 63–83 (LFAVFYTLGNLAALASTCFLM). The Cytoplasmic portion of the chain corresponds to 84 to 97 (GPVKQLKKMFEATR). Residues 98 to 118 (LLATIVMLLCFIFTLCAALWW) traverse the membrane as a helical segment. Topologically, residues 119 to 122 (HKKG) are lumenal. Residues 123–143 (LAVLFCILQFLSMTWYSLSYI) form a helical membrane-spanning segment. At 144–159 (PYARDAVIKCCSSLLS) the chain is on the cytoplasmic side.

The protein belongs to the SFT2 family.

It is found in the membrane. Its function is as follows. May be involved in fusion of retrograde transport vesicles derived from an endocytic compartment with the Golgi complex. This chain is Vesicle transport protein SFT2A, found in Homo sapiens (Human).